The primary structure comprises 74 residues: Cyclin-dependent kinases regulatory subunit (74 aa).

Belongs to the CKS family. Forms a homohexamer that can probably bind six kinase subunits.

In terms of biological role, binds to the catalytic subunit of the cyclin dependent kinases Cdk1 and Cdk2, and is essential for their biological function. The sequence is that of Cyclin-dependent kinases regulatory subunit (Cks30A) from Drosophila melanogaster (Fruit fly).